A 116-amino-acid polypeptide reads, in one-letter code: NADH-ubiquinone oxidoreductase chain 3 (116 aa).

Transmembrane regions (helical) follow at residues 8–28 (VAAT…LPSL), 56–76 (FFLV…LLPL), and 87–107 (ISLL…IYEW).

The protein belongs to the complex I subunit 3 family.

It is found in the mitochondrion membrane. The catalysed reaction is a ubiquinone + NADH + 5 H(+)(in) = a ubiquinol + NAD(+) + 4 H(+)(out). In terms of biological role, core subunit of the mitochondrial membrane respiratory chain NADH dehydrogenase (Complex I) that is believed to belong to the minimal assembly required for catalysis. Complex I functions in the transfer of electrons from NADH to the respiratory chain. The immediate electron acceptor for the enzyme is believed to be ubiquinone. This is NADH-ubiquinone oxidoreductase chain 3 (MT-ND3) from Squalus acanthias (Spiny dogfish).